A 341-amino-acid chain; its full sequence is Holliday junction branch migration complex subunit RuvB (341 aa).

The segment at 1–22 (MSETAGKGVTMPEIMQSSYPDE) is disordered. The large ATPase domain (RuvB-L) stretch occupies residues 4–193 (TAGKGVTMPE…FGIISRLEFY (190 aa)). Residues Ile32, Arg33, Gly74, Lys77, Thr78, Thr79, 140–142 (EDY), Arg183, Tyr193, and Arg230 each bind ATP. Position 78 (Thr78) interacts with Mg(2+). A small ATPAse domain (RuvB-S) region spans residues 194 to 264 (TPEELSQIIL…LVNHALQKLD (71 aa)). Residues 267 to 341 (EKGLDQMDRK…KAYKHLNLTD (75 aa)) form a head domain (RuvB-H) region. Residues Arg322 and Arg327 each coordinate DNA.

The protein belongs to the RuvB family. Homohexamer. Forms an RuvA(8)-RuvB(12)-Holliday junction (HJ) complex. HJ DNA is sandwiched between 2 RuvA tetramers; dsDNA enters through RuvA and exits via RuvB. An RuvB hexamer assembles on each DNA strand where it exits the tetramer. Each RuvB hexamer is contacted by two RuvA subunits (via domain III) on 2 adjacent RuvB subunits; this complex drives branch migration. In the full resolvosome a probable DNA-RuvA(4)-RuvB(12)-RuvC(2) complex forms which resolves the HJ.

The protein resides in the cytoplasm. It carries out the reaction ATP + H2O = ADP + phosphate + H(+). In terms of biological role, the RuvA-RuvB-RuvC complex processes Holliday junction (HJ) DNA during genetic recombination and DNA repair, while the RuvA-RuvB complex plays an important role in the rescue of blocked DNA replication forks via replication fork reversal (RFR). RuvA specifically binds to HJ cruciform DNA, conferring on it an open structure. The RuvB hexamer acts as an ATP-dependent pump, pulling dsDNA into and through the RuvAB complex. RuvB forms 2 homohexamers on either side of HJ DNA bound by 1 or 2 RuvA tetramers; 4 subunits per hexamer contact DNA at a time. Coordinated motions by a converter formed by DNA-disengaged RuvB subunits stimulates ATP hydrolysis and nucleotide exchange. Immobilization of the converter enables RuvB to convert the ATP-contained energy into a lever motion, pulling 2 nucleotides of DNA out of the RuvA tetramer per ATP hydrolyzed, thus driving DNA branch migration. The RuvB motors rotate together with the DNA substrate, which together with the progressing nucleotide cycle form the mechanistic basis for DNA recombination by continuous HJ branch migration. Branch migration allows RuvC to scan DNA until it finds its consensus sequence, where it cleaves and resolves cruciform DNA. This chain is Holliday junction branch migration complex subunit RuvB, found in Lawsonia intracellularis (strain PHE/MN1-00).